The following is a 462-amino-acid chain: Glutamate--tRNA ligase (462 aa).

A 'HIGH' region motif is present at residues 11–21; that stretch reads PSPTGFIHLGN. The segment covering 120-131 has biased composition (basic and acidic residues); it reads KPRYDGTWRPEP. The tract at residues 120–140 is disordered; it reads KPRYDGTWRPEPGKTLPPIPA. A 'KMSKS' region motif is present at residues 243–247; that stretch reads KMSKR. K246 contributes to the ATP binding site.

The protein belongs to the class-I aminoacyl-tRNA synthetase family. Glutamate--tRNA ligase type 1 subfamily. Monomer.

It localises to the cytoplasm. The enzyme catalyses tRNA(Glu) + L-glutamate + ATP = L-glutamyl-tRNA(Glu) + AMP + diphosphate. Functionally, catalyzes the attachment of glutamate to tRNA(Glu) in a two-step reaction: glutamate is first activated by ATP to form Glu-AMP and then transferred to the acceptor end of tRNA(Glu). The sequence is that of Glutamate--tRNA ligase from Polaromonas sp. (strain JS666 / ATCC BAA-500).